The chain runs to 551 residues: Thermophilic beta-amylase (551 aa).

A signal peptide spans 1–32 (MIGAFKRLGQKLFLTLLTASLIFASSIVTANA). Substrate is bound at residue aspartate 73. Glutamate 80 is a Ca(2+) binding site. Residues histidine 113 and aspartate 121 each contribute to the substrate site. Glutamate 167 is a binding site for Ca(2+). Glutamate 195 (proton donor) is an active-site residue. Substrate is bound by residues lysine 310, histidine 315, and threonine 353. Glutamate 392 serves as the catalytic Proton acceptor. Substrate-binding positions include 393 to 394 (NA) and arginine 423. Residues 448–551 (LTPNGTIPVT…TGSVTITWQN (104 aa)) form the CBM20 domain.

It belongs to the glycosyl hydrolase 14 family. In terms of assembly, monomer. Ca(2+) serves as cofactor.

The enzyme catalyses Hydrolysis of (1-&gt;4)-alpha-D-glucosidic linkages in polysaccharides so as to remove successive maltose units from the non-reducing ends of the chains.. This chain is Thermophilic beta-amylase, found in Thermoanaerobacterium thermosulfurigenes (Clostridium thermosulfurogenes).